A 325-amino-acid chain; its full sequence is Germination protease (325 aa).

The propeptide occupies 1–7; the sequence is MYNVRTD.

It belongs to the peptidase A25 family. In terms of assembly, homotetramer. Autoproteolytically processed. The inactive tetrameric zymogen termed p46 autoprocesses to a smaller form termed p41, which is active only during spore germination.

The catalysed reaction is Endopeptidase action with P4 Glu or Asp, P1 preferably Glu &gt; Asp, P1' hydrophobic and P2' Ala.. In terms of biological role, initiates the rapid degradation of small, acid-soluble proteins during spore germination. The protein is Germination protease of Clostridium perfringens (strain 13 / Type A).